A 663-amino-acid chain; its full sequence is Beta-galactosidase BgaH (663 aa).

A substrate-binding site is contributed by R103. C107 is a binding site for Zn(2+). N141 provides a ligand contact to substrate. The active-site Proton donor is E142. Zn(2+) is bound by residues C151, C153, and C156. Catalysis depends on E311, which acts as the Nucleophile. Substrate contacts are provided by residues W319 and E359 to H362.

It belongs to the glycosyl hydrolase 42 family. Homodimer.

The enzyme catalyses Hydrolysis of terminal non-reducing beta-D-galactose residues in beta-D-galactosides.. Requires 4 M NaCl for maximal activity. Loss of activity if DTT or beta-mercaptoethanol is omitted from buffers. Addition of 5-20 mM EDTA, 1 mM Cu(2+) or 1 mM Zn(2+) results in loss of activity. Its function is as follows. When overexpressed, cleaves several different substrates including o-nitrophenyl-beta-D-galactopyranoside (ONPG), chromogen 5-bromo-4-chloro-3-indolyl-beta-D-galactopyranoside (X-Gal) and lactulose, but not lactose. Also has beta-D-fucosidase activity. No beta-L-fucosidase, beta-glucosidase, beta-arabinosidase or beta-xylosidase activity. In Haloferax lucentense (strain DSM 14919 / JCM 9276 / NCIMB 13854 / Aa 2.2) (Haloferax alicantei), this protein is Beta-galactosidase BgaH.